Here is a 570-residue protein sequence, read N- to C-terminus: Low-affinity glucose transporter HXT1 (570 aa).

Residues 1–20 (MNSTPDLISPQKSNSSNSYE) are compositionally biased toward polar residues. Residues 1-51 (MNSTPDLISPQKSNSSNSYELESGRSKAMNTPEGKNESFHDNLSESQVQPA) are disordered. The Cytoplasmic segment spans residues 1–60 (MNSTPDLISPQKSNSSNSYELESGRSKAMNTPEGKNESFHDNLSESQVQPAVAPPNTGKG). 3 positions are modified to phosphoserine: serine 23, serine 38, and serine 44. Positions 34 to 43 (GKNESFHDNL) are enriched in basic and acidic residues. The chain crosses the membrane as a helical span at residues 61 to 81 (VYVTVSICCVMVAFGGFIFGW). At 82–116 (DTGTISGFVAQTDFLRRFGMKHHDGSHYLSKVRTG) the chain is on the extracellular side. A helical transmembrane segment spans residues 117-137 (LIVSIFNIGCAIGGIVLAKLG). The Cytoplasmic segment spans residues 138 to 143 (DMYGRR). A helical transmembrane segment spans residues 144–164 (IGLIVVVVIYTIGIIIQIASI). The Extracellular segment spans residues 165–174 (NKWYQYFIGR). Residues 175–195 (IISGLGVGGITVLSPMLISEV) form a helical membrane-spanning segment. Residues 196-201 (APSEMR) lie on the Cytoplasmic side of the membrane. Residues 202–222 (GTLVSCYQVMITLGIFLGYCT) form a helical membrane-spanning segment. Residues 223–236 (NFGTKNYSNSVQWR) are Extracellular-facing. The N-linked (GlcNAc...) asparagine glycan is linked to asparagine 228. The helical transmembrane segment at 237 to 257 (VPLGLCFAWALFMIGGMMFVP) threads the bilayer. At 258 to 340 (ESPRYLVEAG…IQSLQQLTGD (83 aa)) the chain is on the cytoplasmic side. The helical transmembrane segment at 341–357 (NYFFYYGTIVFQAVGLS) threads the bilayer. The Extracellular portion of the chain corresponds to 358-363 (DSFETS). A helical membrane pass occupies residues 364 to 381 (IVFGVVNFFSTCCSLYTV). Topologically, residues 382–388 (DRFGRRN) are cytoplasmic. A helical membrane pass occupies residues 389 to 409 (CLMWGAVGMVCCYVVYASVGV). Residues 410–431 (TRLWPNGQDQPSSKGAGNCMIV) lie on the Extracellular side of the membrane. The chain crosses the membrane as a helical span at residues 432–452 (FACFYIFCFATTWAPIAYVVI). Over 453 to 469 (SECFPLRVKSKCMSIAS) the chain is Cytoplasmic. A helical membrane pass occupies residues 470-490 (AANWIWGFLISFFTPFITGAI). Residue asparagine 491 is a topological domain, extracellular. A helical membrane pass occupies residues 492–512 (FYYGYVFMGCMVFAYFYVFFF). Over 513–570 (VPETKGLSLEEVNDMYAEGVLPWKSASWVPVSKRGADYNADDLMHDDQPFYKSLFSRK) the chain is Cytoplasmic.

This sequence belongs to the major facilitator superfamily. Sugar transporter (TC 2.A.1.1) family.

The protein localises to the membrane. In terms of biological role, low-affinity glucose transporter. HXT1 is as well involved in the transport of mannose. This Saccharomyces cerevisiae (strain ATCC 204508 / S288c) (Baker's yeast) protein is Low-affinity glucose transporter HXT1 (HXT1).